The primary structure comprises 79 residues: Small ribosomal subunit protein uS17 (79 aa).

Belongs to the universal ribosomal protein uS17 family. As to quaternary structure, part of the 30S ribosomal subunit.

Its function is as follows. One of the primary rRNA binding proteins, it binds specifically to the 5'-end of 16S ribosomal RNA. The sequence is that of Small ribosomal subunit protein uS17 from Caulobacter sp. (strain K31).